The primary structure comprises 133 residues: Ribonuclease VapC17 (133 aa).

Positions 7 and 93 each coordinate Mg(2+). Residues 30 to 118 (AICDIGELEW…HHDRDYKRIA (89 aa)) enclose the PINc domain.

It belongs to the PINc/VapC protein family. It depends on Mg(2+) as a cofactor.

Its function is as follows. Toxic component of a type II toxin-antitoxin (TA) system. An RNase. The cognate antitoxin is VapB17. The polypeptide is Ribonuclease VapC17 (Mycobacterium tuberculosis (strain CDC 1551 / Oshkosh)).